We begin with the raw amino-acid sequence, 807 residues long: Centrosomal protein of 97 kDa (807 aa).

LRR repeat units lie at residues 34–55 (DTQT…EKCR), 56–77 (NLVQ…AKLI), 78–99 (HLRV…KDLV), 100–121 (HLEW…NSST), 122–143 (SLQH…SKLK), 144–165 (SLKT…SACL), and 168–189 (SLTI…AFLA). The region spanning 208–246 (TPSIPGFDYRPFIVSWCLNLKVLDGYVVSQKESLKAEWL) is the LRRCT domain. Residues 306–330 (RSDGYLTSSTPNKRLPLSTEHHSPT) are disordered. The 30-residue stretch at 519–548 (ISKAATKLQSCWRGFYARKYNPKVKDVCYE) folds into the IQ domain. Over residues 607-623 (TANSSENDLPSASNSKH) the composition is skewed to polar residues. Residues 607-756 (TANSSENDLP…RPEITTCSDN (150 aa)) form a disordered region. Over residues 681 to 690 (TGRHYNDKVP) the composition is skewed to basic and acidic residues. A compositionally biased stretch (polar residues) spans 704–724 (SQSSKDSFTSEQDSSLLQQYL).

It is found in the cytoplasm. The protein resides in the cytoskeleton. It localises to the microtubule organizing center. Its subcellular location is the centrosome. Its function is as follows. Acts as a key negative regulator of ciliogenesis in collaboration with ccp110 by capping the mother centriole thereby preventing cilia formation. Required for recruitment of ccp110 to the centrosome. This is Centrosomal protein of 97 kDa (cep97) from Xenopus laevis (African clawed frog).